A 477-amino-acid chain; its full sequence is Delayed-rectifier potassium channel regulatory subunit KCNS2 (477 aa).

The Cytoplasmic portion of the chain corresponds to 1–184; that stretch reads MTRQSLWDLS…LALDNPGYSV (184 aa). Residues 185 to 206 traverse the membrane as a helical segment; the sequence is LSRVFSVLSILVVLGSIITMCL. Over 207–225 the chain is Extracellular; sequence NSLPDFQIPDSQGNPGEDP. The helical transmembrane segment at 226–248 threads the bilayer; it reads RFEIVEHFGIAWFTFELVARFAV. Residues 249–259 are Cytoplasmic-facing; the sequence is APDFLKFFKNA. A helical membrane pass occupies residues 260–280; sequence LNLIDLMSIVPFYITLVVNLV. At 281–290 the chain is on the extracellular side; sequence VESSPTLANL. The helical; Voltage-sensor transmembrane segment at 291 to 311 threads the bilayer; that stretch reads GRVAQVLRLMRIFRILKLARH. The Cytoplasmic segment spans residues 312-326; the sequence is STGLRSLGATLKYSY. A helical transmembrane segment spans residues 327 to 348; that stretch reads KEVGLLLLYLSVGISIFSVVAY. At 349 to 361 the chain is on the extracellular side; sequence TIEKEENEGLATI. Positions 362–373 form an intramembrane region, helical; it reads PACWWWATVSMT. A Selectivity filter motif is present at residues 374-379; that stretch reads TVGYGD. Residues 374–381 lie within the membrane without spanning it; it reads TVGYGDVV. Topologically, residues 382–388 are extracellular; that stretch reads PGTTAGK. The helical transmembrane segment at 389–417 threads the bilayer; sequence LTASACILAGILVVVLPITLIFNKFSHFY. The Cytoplasmic portion of the chain corresponds to 418–477; it reads RRQKQLESAMRSCDFGDGMKEVPSVNLRDYYAHKVKSLMASLTNMSRSSPSELSLDDSLH.

It belongs to the potassium channel family. S (TC 1.A.1.2) subfamily. Kv9.2/KCNS2 sub-subfamily. As to quaternary structure, heterotetramer with KCNB1 and KCNB2. Does not form homomultimers. Detected in brain, lung and in pulmonary arteries.

Its subcellular location is the cell membrane. In terms of biological role, potassium channel regulatory subunit that modulate the delayed rectifier voltage-gated potassium channel activity of KCNB1 and KCNB2 by altering their kinetics, expression levels, and shifting the half-inactivation potential to more polarized values. While it does not form functional channels on its own, it can form functional heterotetrameric channels with KCNB1 and KCNB2. Each regulatory subunit has unique regulatory properties that can lead to extensive inhibition, significant changes in kinetics, and/or substantial shifts in the voltage dependencies of the inactivation process. In Rattus norvegicus (Rat), this protein is Delayed-rectifier potassium channel regulatory subunit KCNS2.